A 329-amino-acid polypeptide reads, in one-letter code: Acetyl-coenzyme A carboxylase carboxyl transferase subunit alpha (329 aa).

Residues 40-294 (QLETLAARRR…KTSILRHLTE (255 aa)) enclose the CoA carboxyltransferase C-terminal domain.

This sequence belongs to the AccA family. As to quaternary structure, acetyl-CoA carboxylase is a heterohexamer composed of biotin carboxyl carrier protein (AccB), biotin carboxylase (AccC) and two subunits each of ACCase subunit alpha (AccA) and ACCase subunit beta (AccD).

It is found in the cytoplasm. It carries out the reaction N(6)-carboxybiotinyl-L-lysyl-[protein] + acetyl-CoA = N(6)-biotinyl-L-lysyl-[protein] + malonyl-CoA. Its pathway is lipid metabolism; malonyl-CoA biosynthesis; malonyl-CoA from acetyl-CoA: step 1/1. In terms of biological role, component of the acetyl coenzyme A carboxylase (ACC) complex. First, biotin carboxylase catalyzes the carboxylation of biotin on its carrier protein (BCCP) and then the CO(2) group is transferred by the carboxyltransferase to acetyl-CoA to form malonyl-CoA. This is Acetyl-coenzyme A carboxylase carboxyl transferase subunit alpha from Prochlorococcus marinus (strain SARG / CCMP1375 / SS120).